The chain runs to 83 residues: Exodeoxyribonuclease 7 small subunit (83 aa).

Belongs to the XseB family. Heterooligomer composed of large and small subunits.

The protein resides in the cytoplasm. It catalyses the reaction Exonucleolytic cleavage in either 5'- to 3'- or 3'- to 5'-direction to yield nucleoside 5'-phosphates.. Functionally, bidirectionally degrades single-stranded DNA into large acid-insoluble oligonucleotides, which are then degraded further into small acid-soluble oligonucleotides. In Nitrobacter hamburgensis (strain DSM 10229 / NCIMB 13809 / X14), this protein is Exodeoxyribonuclease 7 small subunit.